The chain runs to 315 residues: Ribosomal RNA large subunit methyltransferase F (315 aa).

The protein belongs to the methyltransferase superfamily. METTL16/RlmF family.

Its subcellular location is the cytoplasm. The catalysed reaction is adenosine(1618) in 23S rRNA + S-adenosyl-L-methionine = N(6)-methyladenosine(1618) in 23S rRNA + S-adenosyl-L-homocysteine + H(+). Functionally, specifically methylates the adenine in position 1618 of 23S rRNA. The sequence is that of Ribosomal RNA large subunit methyltransferase F from Aeromonas salmonicida (strain A449).